The chain runs to 591 residues: Homeobox domain-containing transcription factor HOB1 (591 aa).

Over residues 1 to 15 (MEGKNEDMHTPRGPE) the composition is skewed to basic and acidic residues. Disordered stretches follow at residues 1-37 (MEGKNEDMHTPRGPEDASNIADEYPSPERQQQGDMLG) and 148-168 (IAGPSTLRRSPLPDTFSRSPA). Positions 176 to 223 (IAILRESYARNPNPDRKELERLAARTGRPWNKIREYFRQRRNKLRGLE) form a DNA-binding region, homeobox. Disordered stretches follow at residues 420 to 463 (DAGL…PRES) and 543 to 563 (DAIERRNAGESKRKRDDALTE). Over residues 427–441 (QGEEDQPPTVEESDQ) the composition is skewed to acidic residues. Over residues 543-560 (DAIERRNAGESKRKRDDA) the composition is skewed to basic and acidic residues.

The protein resides in the nucleus. General stress-responsive transcription factor that governs multiple stress responses and adaptations. Plays a key role in virulence. Mediates the expression of LAC1, which is the major laccase involved in melanin synthesis. Positively regulates BZP4 induction under conditions of nutrient starvation and basal expression levels of MBS1 and USV101, 3 major transcription factors that independently contribute to melanin production. Also acts as a key regulator of ergosterol gene expression. In Cryptococcus neoformans var. grubii serotype A (strain H99 / ATCC 208821 / CBS 10515 / FGSC 9487) (Filobasidiella neoformans var. grubii), this protein is Homeobox domain-containing transcription factor HOB1.